The following is a 195-amino-acid chain: Probable nicotinate-nucleotide adenylyltransferase (195 aa).

This sequence belongs to the NadD family.

It catalyses the reaction nicotinate beta-D-ribonucleotide + ATP + H(+) = deamido-NAD(+) + diphosphate. The protein operates within cofactor biosynthesis; NAD(+) biosynthesis; deamido-NAD(+) from nicotinate D-ribonucleotide: step 1/1. In terms of biological role, catalyzes the reversible adenylation of nicotinate mononucleotide (NaMN) to nicotinic acid adenine dinucleotide (NaAD). The protein is Probable nicotinate-nucleotide adenylyltransferase of Chlorobaculum tepidum (strain ATCC 49652 / DSM 12025 / NBRC 103806 / TLS) (Chlorobium tepidum).